Here is a 298-residue protein sequence, read N- to C-terminus: Putative F-box and FNIP repeat-containing protein R286 (298 aa).

Residues 4-48 (LNVLESHVILHIIEFLPDHEKIKFMSTCKSLYEFRCHVTYNNFYV) enclose the F-box domain. FNIP repeat units follow at residues 124–165 (FNKP…LGHN) and 255–297 (WNFD…FISR).

The protein is Putative F-box and FNIP repeat-containing protein R286 of Acanthamoeba polyphaga (Amoeba).